The chain runs to 892 residues: NACHT, LRR and PYD domains-containing protein 6 (892 aa).

The region spanning 1–103 (MDQPEAPCSS…AAQLQERRLQ (103 aa)) is the Pyrin domain. The disordered stretch occupies residues 158–181 (APEEAMGPAEEPEPGRARRSDTHT). Positions 170 to 181 (EPGRARRSDTHT) are enriched in basic and acidic residues. The 318-residue stretch at 196-513 (LTVVLQGPAG…EFLAALSYLL (318 aa)) folds into the NACHT domain. 202–209 (GPAGIGKT) lines the ATP pocket. The segment at 352 to 356 (KDKKK) is disordered. Residues 462–487 (EKELEQLELRGSKVQTLFLSKKELPG) form an LRR 1 repeat. The segment at 590–614 (APEVTEGAKGLEDTEEPEEEEEGEE) is disordered. Acidic residues predominate over residues 602–614 (DTEEPEEEEEGEE). LRR repeat units lie at residues 727–747 (LCHLSSLTLSHCKLPDAVCRD), 755–778 (APALTELGLLHNRLSEAGLRMLSE), 811–834 (SPALTTLDLSGCQLPAPMVTYLCA), and 845–868 (TLSLASVELSEQSLQELQAVKRAK).

It belongs to the NLRP family. Homomultimer; forms the NLRP6 inflammasome polymeric complex, a filament composed of homopolymers in response to pathogens and other damage-associated signals. The core of NLRP6 inflammasomes consists of a signal sensor component (NLRP6), an adapter (PYCARD/ASC), which recruits effector pro-inflammatory caspases (CASP1 and CASP4). Interacts (via pyrin domain) with PYCARD/ASC (via pyrin domain); interaction takes place following NLRP6 activation and formation of liquid-liquid phase separation (LLPS), initiating nucleation which greatly enhances further addition of soluble PYCARD/ASC molecules to the speck in a prion-like polymerization process. Clustered PYCARD/ASC nucleates the formation of CASP1 (or possibly CASP4) filaments through the interaction of their respective CARD domains, acting as a platform for CASP1 polymerization. CASP1 filament formation increases local enzyme concentration, resulting in trans-autocleavage and activation. Active CASP1 then processes IL1B and IL18 precursors, leading to the release of mature cytokines in the extracellular milieu and inflammatory response. Interacts with DHX15. In terms of processing, polyubiquitinated with 'Lys-63'-linked chains, promoting the interaction with PYCARD/ASC and formation of the NLRP6 inflammasome. Deubiquitination by CYLD decreases the interaction with PYCARD/ASC. As to expression, expressed in peripheral blood leukocytes, predominantly in granulocytes and, at lower levels, in CD4(+) and CD8(+) T-cells. Expressed in colonic myofibroblasts (at protein level).

The protein localises to the cytoplasm. Its subcellular location is the cytosol. The protein resides in the inflammasome. It localises to the cell membrane. It is found in the nucleus membrane. Functionally, acts as the sensor component of the NLRP6 inflammasome, which mediates inflammasome activation in response to various pathogen-associated signals, leading to maturation and secretion of IL1B and IL18. Inflammasomes are supramolecular complexes that assemble in the cytosol in response to pathogens and other damage-associated signals and play critical roles in innate immunity and inflammation. Acts as a recognition receptor (PRR): recognizes and binds specific pathogens and other damage-associated signals, such as lipoteichoic acid (LTA), a cell-wall component of Gram-positive bacteria, or double stranded RNA (dsRNA). May also recognize and bind lipopolysaccharide (LPS), a major component of the outer membrane of Gram-negative bacteria; however, LPS is probably not a major activator of the NLRP6 inflammasome. Following LTA- or dsRNA-binding, NLRP6 undergoes liquid-liquid phase separation (LLPS), enhancing multivalent interactions, an essential step for the formation of the NLRP6 inflammasome polymeric complex. The NLRP6 inflammasome acts by promoting recruitment of effector pro-inflammatory caspases (CASP1 and/or CASP4) that catalyze maturation and secretion of IL1B and IL18 in the extracellular milieu. The NLRP6 inflammasome plays a central role in the maintenance of epithelial integrity and host defense against microbial infections in the intestine. Required to restrict infection against Gram-positive bacteria by recognizing lipoteichoic acid (LTA), leading to recruitment of CASP4 and CASP1, and subsequent maturation and secretion of IL1B and IL18. Involved in intestinal antiviral innate immunity together with DHX15: recognizes and binds viral dsRNA to restrict infection by enteric viruses through the interferon pathway and GSDMD-dependent release of IL18. Required to prevent infection by the apicomplexan parasite Cryptosporidium in enterocytes by promoting GSDMD-dependent release of IL18. The NLRP6 inflammasome may also regulate the gut microbiota composition by acting as a sensor of microbiota-associated metabolites to form a PYCARD/ASC-dependent inflammasome for downstream IL18 release and secretion of antimicrobial peptides. Essential for gut mucosal self-renewal and proliferation. Regulate mucus secretion in an inflammasome- and autophagy-dependent manner to prevent invasion by enteric bacteria,. During systemic bacterial infections, the NLRP6 inflammasome negatively regulates neutrophil recruitment and neutrophil extracellular traps (NETs) formation. May promote peripheral nerve recovery following injury via an inflammasome-independent mechanism. This is NACHT, LRR and PYD domains-containing protein 6 from Homo sapiens (Human).